The chain runs to 336 residues: UPF0284 protein Pcal_1534 (336 aa).

It belongs to the UPF0284 family.

This Pyrobaculum calidifontis (strain DSM 21063 / JCM 11548 / VA1) protein is UPF0284 protein Pcal_1534.